The primary structure comprises 686 residues: XK-related protein 5 (686 aa).

The next 5 membrane-spanning stretches (helical) occupy residues L33 to S53, H205 to A225, L239 to P259, V265 to F285, and I297 to L317. Disordered stretches follow at residues G339–A387, A448–S468, and F490–P592. The span at D340–E359 shows a compositional bias: basic and acidic residues. Composition is skewed to polar residues over residues S450–S468 and F490–E509. The segment covering Q523–G536 has biased composition (gly residues). The span at V550–H567 shows a compositional bias: polar residues.

This sequence belongs to the XK family.

It localises to the cell membrane. This Homo sapiens (Human) protein is XK-related protein 5.